A 787-amino-acid polypeptide reads, in one-letter code: Phenylalanine--tRNA ligase beta subunit (787 aa).

The tRNA-binding domain occupies alanine 39–arginine 149. The B5 domain maps to proline 400–aspartate 475. Mg(2+) is bound by residues aspartate 453, aspartate 459, glutamate 462, and glutamate 463. The FDX-ACB domain occupies serine 694–arginine 786.

This sequence belongs to the phenylalanyl-tRNA synthetase beta subunit family. Type 1 subfamily. As to quaternary structure, tetramer of two alpha and two beta subunits. Mg(2+) serves as cofactor.

It is found in the cytoplasm. It catalyses the reaction tRNA(Phe) + L-phenylalanine + ATP = L-phenylalanyl-tRNA(Phe) + AMP + diphosphate + H(+). This Neisseria meningitidis serogroup A / serotype 4A (strain DSM 15465 / Z2491) protein is Phenylalanine--tRNA ligase beta subunit (pheT).